Here is a 539-residue protein sequence, read N- to C-terminus: Probable K(+)/H(+) antiporter subunit D (539 aa).

A run of 14 helical transmembrane segments spans residues 4–23, 36–58, 78–100, 113–135, 140–162, 175–197, 217–239, 251–273, 283–305, 312–331, 335–357, 400–422, 442–464, and 484–506; these read WLDH…AAVL, AIGF…LAAA, FGIV…GLAL, AGHH…FLTG, LFVF…SGPL, LAAS…TLNM, MGSA…SFWL, AGVF…LLVF, FGQE…GVLA, LAGY…VGLG, MLAG…FLLI, VLGL…SGFI, AMSA…AMIA, and VVVI…SLQA.

It belongs to the CPA3 antiporters (TC 2.A.63) subunit D family. As to quaternary structure, may form a hetero-oligomeric complex that consists of six subunits: PhaAB, PhaC, PhaD, PhaE, PhaF and PhaG.

It localises to the cell membrane. Its function is as follows. Part of a K(+) efflux system which is required for the adaptation of R.meliloti to alkaline pH as well as for the infection process during symbiotic nodule development. This chain is Probable K(+)/H(+) antiporter subunit D (phaD), found in Rhizobium meliloti (strain 1021) (Ensifer meliloti).